Here is a 311-residue protein sequence, read N- to C-terminus: Heme A synthase (311 aa).

The Cytoplasmic segment spans residues 1-6 (MQRFIK). Residues 7-27 (WLAVITSLDLLIVLLGGALVT) traverse the membrane as a helical segment. Over 28 to 62 (KTGSGQGCGKSWPLCNGEFVPSNLSMETIIELSHR) the chain is Extracellular. A disulfide bond links C35 and C42. E58 is a catalytic residue. Residue H61 coordinates heme o. The chain crosses the membrane as a helical span at residues 63-83 (LTSGSAGILVTLLCILSWKYY). Over 84–91 (KHVRETKT) the chain is Cytoplasmic. Residues 92-112 (LAILSFVFLVAQALMGAAAVV) form a helical membrane-spanning segment. Residues 113 to 121 (WGQMPAVLA) lie on the Extracellular side of the membrane. The chain crosses the membrane as a helical span at residues 122 to 142 (IHFGISLISFASVILLTCLIF). A heme o-binding site is contributed by H123. Topologically, residues 143–159 (EIDQKFDARSLIMDKKM) are cytoplasmic. Residues 160-180 (KFHIYGVTIYCYLVVYTGALV) traverse the membrane as a helical segment. Topologically, residues 181–211 (RHERASLACPDFPLCSKNRPMPTQLHEWVQM) are extracellular. Cysteines 189 and 195 form a disulfide. The helical transmembrane segment at 212–232 (GHRLAAMLIFVWILYAMILAI) threads the bilayer. Heme b is bound at residue H213. Residues 233 to 243 (RHYKQQPVVYW) are Cytoplasmic-facing. A helical transmembrane segment spans residues 244–264 (GWIISFILVTLQAIVGILVVF). Residues 265–271 (TNASLAM) lie on the Extracellular side of the membrane. The chain crosses the membrane as a helical span at residues 272-292 (ALLHSLFISCLFAVLCYLVML). H275 is a binding site for heme b. The Cytoplasmic segment spans residues 293–311 (GTRSKVNAKEAASTSKQTK).

This sequence belongs to the COX15/CtaA family. Type 1 subfamily. In terms of assembly, interacts with CtaB. Requires heme b as cofactor.

It localises to the cell membrane. It catalyses the reaction Fe(II)-heme o + 2 A + H2O = Fe(II)-heme a + 2 AH2. The protein operates within porphyrin-containing compound metabolism; heme A biosynthesis; heme A from heme O: step 1/1. In terms of biological role, catalyzes the conversion of heme O to heme A by two successive hydroxylations of the methyl group at C8. The first hydroxylation forms heme I, the second hydroxylation results in an unstable dihydroxymethyl group, which spontaneously dehydrates, resulting in the formyl group of heme A. This Bacillus cereus (strain 03BB102) protein is Heme A synthase.